The sequence spans 95 residues: Defensin (95 aa).

An N-terminal signal peptide occupies residues 1-17 (MKNYVFALLVVTAVAIA). Residues 18–55 (LPNEDKNAPMRVHLLPQKEDESLKLEVTPVKEHHRTRR) constitute a propeptide that is removed on maturation. 3 disulfides stabilise this stretch: Cys58–Cys85, Cys71–Cys91, and Cys75–Cys93.

This sequence belongs to the invertebrate defensin family. Type 1 subfamily.

It localises to the secreted. Antibacterial peptide mostly active against Gram-positive bacteria. This Formica aquilonia (Red wood ant) protein is Defensin.